A 215-amino-acid polypeptide reads, in one-letter code: Probable GTP-binding protein EngB (215 aa).

The 185-residue stretch at 31 to 215 (GPPEIAFAGR…RAAILQAIAV (185 aa)) folds into the EngB-type G domain. Residues 39-46 (GRSNVGKS), 66-70 (GRTQE), 93-96 (DMPG), 160-163 (TKSD), and 194-196 (TSS) each bind GTP. Mg(2+)-binding residues include Ser46 and Thr68.

It belongs to the TRAFAC class TrmE-Era-EngA-EngB-Septin-like GTPase superfamily. EngB GTPase family. Mg(2+) is required as a cofactor.

Necessary for normal cell division and for the maintenance of normal septation. This is Probable GTP-binding protein EngB from Bartonella quintana (strain Toulouse) (Rochalimaea quintana).